The sequence spans 930 residues: Isoleucine--tRNA ligase (930 aa).

The 'HIGH' region signature appears at Pro-57–His-67. Glu-554 contributes to the L-isoleucyl-5'-AMP binding site. Residues Lys-595–Ser-599 carry the 'KMSKS' region motif. Residue Lys-598 participates in ATP binding. Residues Cys-888, Cys-891, Cys-908, and Cys-911 each contribute to the Zn(2+) site.

This sequence belongs to the class-I aminoacyl-tRNA synthetase family. IleS type 1 subfamily. Monomer. Zn(2+) serves as cofactor.

It localises to the cytoplasm. The catalysed reaction is tRNA(Ile) + L-isoleucine + ATP = L-isoleucyl-tRNA(Ile) + AMP + diphosphate. Catalyzes the attachment of isoleucine to tRNA(Ile). As IleRS can inadvertently accommodate and process structurally similar amino acids such as valine, to avoid such errors it has two additional distinct tRNA(Ile)-dependent editing activities. One activity is designated as 'pretransfer' editing and involves the hydrolysis of activated Val-AMP. The other activity is designated 'posttransfer' editing and involves deacylation of mischarged Val-tRNA(Ile). This Streptococcus pneumoniae (strain CGSP14) protein is Isoleucine--tRNA ligase.